We begin with the raw amino-acid sequence, 217 residues long: Thiamine-phosphate synthase (217 aa).

4-amino-2-methyl-5-(diphosphooxymethyl)pyrimidine-binding positions include Gln-42–Lys-46 and Asp-77. 2 residues coordinate Mg(2+): Asp-78 and Asp-97. Ser-117 lines the 4-amino-2-methyl-5-(diphosphooxymethyl)pyrimidine pocket. Position 144–146 (Thr-144–Ser-146) interacts with 2-[(2R,5Z)-2-carboxy-4-methylthiazol-5(2H)-ylidene]ethyl phosphate. Lys-147 is a binding site for 4-amino-2-methyl-5-(diphosphooxymethyl)pyrimidine. 2-[(2R,5Z)-2-carboxy-4-methylthiazol-5(2H)-ylidene]ethyl phosphate is bound by residues Gly-175 and Ile-195 to Thr-196.

It belongs to the thiamine-phosphate synthase family. Mg(2+) is required as a cofactor.

It carries out the reaction 2-[(2R,5Z)-2-carboxy-4-methylthiazol-5(2H)-ylidene]ethyl phosphate + 4-amino-2-methyl-5-(diphosphooxymethyl)pyrimidine + 2 H(+) = thiamine phosphate + CO2 + diphosphate. The catalysed reaction is 2-(2-carboxy-4-methylthiazol-5-yl)ethyl phosphate + 4-amino-2-methyl-5-(diphosphooxymethyl)pyrimidine + 2 H(+) = thiamine phosphate + CO2 + diphosphate. The enzyme catalyses 4-methyl-5-(2-phosphooxyethyl)-thiazole + 4-amino-2-methyl-5-(diphosphooxymethyl)pyrimidine + H(+) = thiamine phosphate + diphosphate. It functions in the pathway cofactor biosynthesis; thiamine diphosphate biosynthesis; thiamine phosphate from 4-amino-2-methyl-5-diphosphomethylpyrimidine and 4-methyl-5-(2-phosphoethyl)-thiazole: step 1/1. Functionally, condenses 4-methyl-5-(beta-hydroxyethyl)thiazole monophosphate (THZ-P) and 2-methyl-4-amino-5-hydroxymethyl pyrimidine pyrophosphate (HMP-PP) to form thiamine monophosphate (TMP). This Levilactobacillus brevis (strain ATCC 367 / BCRC 12310 / CIP 105137 / JCM 1170 / LMG 11437 / NCIMB 947 / NCTC 947) (Lactobacillus brevis) protein is Thiamine-phosphate synthase.